Here is a 383-residue protein sequence, read N- to C-terminus: Ribosomal RNA large subunit methyltransferase G (383 aa).

It belongs to the methyltransferase superfamily. RlmG family.

It is found in the cytoplasm. The enzyme catalyses guanosine(1835) in 23S rRNA + S-adenosyl-L-methionine = N(2)-methylguanosine(1835) in 23S rRNA + S-adenosyl-L-homocysteine + H(+). Its function is as follows. Specifically methylates the guanine in position 1835 (m2G1835) of 23S rRNA. The chain is Ribosomal RNA large subunit methyltransferase G from Vibrio atlanticus (strain LGP32) (Vibrio splendidus (strain Mel32)).